Here is a 462-residue protein sequence, read N- to C-terminus: L-seryl-tRNA(Sec) selenium transferase (462 aa).

Lys292 bears the N6-(pyridoxal phosphate)lysine mark.

This sequence belongs to the SelA family. Pyridoxal 5'-phosphate is required as a cofactor.

The protein localises to the cytoplasm. It catalyses the reaction L-seryl-tRNA(Sec) + selenophosphate + H(+) = L-selenocysteinyl-tRNA(Sec) + phosphate. Its pathway is aminoacyl-tRNA biosynthesis; selenocysteinyl-tRNA(Sec) biosynthesis; selenocysteinyl-tRNA(Sec) from L-seryl-tRNA(Sec) (bacterial route): step 1/1. In terms of biological role, converts seryl-tRNA(Sec) to selenocysteinyl-tRNA(Sec) required for selenoprotein biosynthesis. This is L-seryl-tRNA(Sec) selenium transferase from Geobacter sulfurreducens (strain ATCC 51573 / DSM 12127 / PCA).